Here is a 195-residue protein sequence, read N- to C-terminus: Iron-sulfur flavoprotein AF_1519 (195 aa).

[4Fe-4S] cluster-binding residues include cysteine 45, cysteine 48, cysteine 51, and cysteine 57.

It belongs to the SsuE family. Isf subfamily. In terms of assembly, homodimer. FMN is required as a cofactor. Requires [4Fe-4S] cluster as cofactor.

Its function is as follows. Redox-active protein probably involved in electron transport. The protein is Iron-sulfur flavoprotein AF_1519 of Archaeoglobus fulgidus (strain ATCC 49558 / DSM 4304 / JCM 9628 / NBRC 100126 / VC-16).